The following is a 1410-amino-acid chain: DNA-directed RNA polymerase subunit beta' (1410 aa).

Zn(2+) contacts are provided by C69, C71, C84, and C87. Residues D461, D463, and D465 each contribute to the Mg(2+) site. Zn(2+)-binding residues include C810, C884, C891, and C894.

It belongs to the RNA polymerase beta' chain family. In terms of assembly, the RNAP catalytic core consists of 2 alpha, 1 beta, 1 beta' and 1 omega subunit. When a sigma factor is associated with the core the holoenzyme is formed, which can initiate transcription. Requires Mg(2+) as cofactor. It depends on Zn(2+) as a cofactor.

It carries out the reaction RNA(n) + a ribonucleoside 5'-triphosphate = RNA(n+1) + diphosphate. DNA-dependent RNA polymerase catalyzes the transcription of DNA into RNA using the four ribonucleoside triphosphates as substrates. This chain is DNA-directed RNA polymerase subunit beta', found in Ehrlichia chaffeensis (strain ATCC CRL-10679 / Arkansas).